The following is a 134-amino-acid chain: Putative integral membrane protein YxzK (134 aa).

4 consecutive transmembrane segments (helical) span residues 3–23, 35–55, 58–78, and 89–109; these read VIRI…GEAI, IVGL…VSII, GAGF…TGVI, and LMLL…AGFA.

It localises to the cell membrane. In Bacillus subtilis (strain 168), this protein is Putative integral membrane protein YxzK (yxzK).